We begin with the raw amino-acid sequence, 394 residues long: Actin-related protein 2 (394 aa).

N-acetylmethionine is present on Met-1. ATP-binding positions include 160-162 and 214-218; these read GDG and RMIKE. Position 299 is an N6-acetyllysine (Lys-299). An ATP-binding site is contributed by 305-310; it reads GGSTMY. Residue Lys-322 is modified to N6-acetyllysine.

This sequence belongs to the actin family. ARP2 subfamily. Component of the Arp2/3 complex composed of ACTR2/ARP2, ACTR3/ARP3, ARPC1B/p41-ARC, ARPC2/p34-ARC, ARPC3/p21-ARC, ARPC4/p20-ARC and ARPC5/p16-ARC. Interacts with AVIL.

It is found in the cytoplasm. It localises to the cytoskeleton. Its subcellular location is the cell projection. The protein localises to the nucleus. Functionally, ATP-binding component of the Arp2/3 complex, a multiprotein complex that mediates actin polymerization upon stimulation by nucleation-promoting factor (NPF). The Arp2/3 complex mediates the formation of branched actin networks in the cytoplasm, providing the force for cell motility. Seems to contact the pointed end of the daughter actin filament. In podocytes, required for the formation of lamellipodia downstream of AVIL and PLCE1 regulation. In addition to its role in the cytoplasmic cytoskeleton, the Arp2/3 complex also promotes actin polymerization in the nucleus, thereby regulating gene transcription and repair of damaged DNA. The Arp2/3 complex promotes homologous recombination (HR) repair in response to DNA damage by promoting nuclear actin polymerization, leading to drive motility of double-strand breaks (DSBs). The chain is Actin-related protein 2 (ACTR2) from Bos taurus (Bovine).